Here is a 520-residue protein sequence, read N- to C-terminus: Calcium-dependent protein kinase 25 (520 aa).

Glycine 2 is lipidated: N-myristoyl glycine. The disordered stretch occupies residues 31–87; it reads PLKPQLQDKPPQPMLMNKDDDKTKLNDTHGDPKLLEGKEKPAQKQTSQGQGGRKCSD. A compositionally biased stretch (basic and acidic residues) spans 47–72; sequence NKDDDKTKLNDTHGDPKLLEGKEKPA. Residues 132-390 enclose the Protein kinase domain; that stretch reads YNLGSKLGHG…AQQVLCHPWI (259 aa). Residues 138-146 and lysine 161 contribute to the ATP site; that span reads LGHGQFGTT. The active-site Proton acceptor is aspartate 256. The residue at position 296 (serine 296) is a Phosphoserine. The autoinhibitory domain stretch occupies residues 396–426; sequence APDTPLDTTVLSRLKKFSATDKLKKMALRVI. One can recognise an EF-hand 1 domain in the interval 433–468; that stretch reads EEIHELRETFKTIDSGKSGRVTYKELKNGLERFNTN. Ca(2+) is bound by residues aspartate 446, serine 450, arginine 452, glutamate 457, aspartate 483, glutamate 487, threonine 489, and glutamate 494. The region spanning 469 to 505 is the EF-hand 2; degenerate domain; that stretch reads LDNSDINSLMQIPTDVHLEDTVDYNEFIEAIVRLRQI.

This sequence belongs to the protein kinase superfamily. Ser/Thr protein kinase family. CDPK subfamily.

The protein localises to the membrane. It carries out the reaction L-seryl-[protein] + ATP = O-phospho-L-seryl-[protein] + ADP + H(+). The enzyme catalyses L-threonyl-[protein] + ATP = O-phospho-L-threonyl-[protein] + ADP + H(+). Its activity is regulated as follows. Activated by calcium. Autophosphorylation may play an important role in the regulation of the kinase activity. May play a role in signal transduction pathways that involve calcium as a second messenger. The protein is Calcium-dependent protein kinase 25 (CPK25) of Arabidopsis thaliana (Mouse-ear cress).